The sequence spans 155 residues: Large ribosomal subunit protein eL24 (155 aa).

Positions 92-155 are disordered; sequence AKRNMKPEVR…KSAPRVGGKR (64 aa). Positions 96 to 117 are enriched in basic and acidic residues; sequence MKPEVRKAQRDQAIKAAKEQKK. Over residues 124–133 the composition is skewed to low complexity; that stretch reads KASAPAPKAK.

This sequence belongs to the eukaryotic ribosomal protein eL24 family.

The polypeptide is Large ribosomal subunit protein eL24 (RpL24) (Spodoptera frugiperda (Fall armyworm)).